Consider the following 527-residue polypeptide: Berberine bridge enzyme-like 10 (527 aa).

The first 20 residues, 1–20 (MEKLLVISLLLLISTSVTTS), serve as a signal peptide directing secretion. An intrachain disulfide couples Cys32 to Cys95. Asn53 is a glycosylation site (N-linked (GlcNAc...) asparagine). The region spanning 73–248 (TTPKPISVVA…LGYKIQLVPV (176 aa)) is the FAD-binding PCMH-type domain. A Pros-8alpha-FAD histidine modification is found at His110. Residues Asn137 and Asn293 are each glycosylated (N-linked (GlcNAc...) asparagine).

Belongs to the oxygen-dependent FAD-linked oxidoreductase family. FAD is required as a cofactor.

The protein localises to the secreted. It localises to the cell wall. The sequence is that of Berberine bridge enzyme-like 10 from Arabidopsis thaliana (Mouse-ear cress).